We begin with the raw amino-acid sequence, 169 residues long: Endoribonuclease YbeY (169 aa).

Residues H128, H132, and H138 each contribute to the Zn(2+) site.

Belongs to the endoribonuclease YbeY family. Zn(2+) is required as a cofactor.

Its subcellular location is the cytoplasm. In terms of biological role, single strand-specific metallo-endoribonuclease involved in late-stage 70S ribosome quality control and in maturation of the 3' terminus of the 16S rRNA. The sequence is that of Endoribonuclease YbeY from Cyanothece sp. (strain PCC 7425 / ATCC 29141).